A 228-amino-acid chain; its full sequence is Ribose-5-phosphate isomerase A (228 aa).

Residues 27 to 30 (TGTT), 86 to 89 (DGAD), and 100 to 103 (KGMG) contribute to the substrate site. E109 functions as the Proton acceptor in the catalytic mechanism. K127 serves as a coordination point for substrate.

Belongs to the ribose 5-phosphate isomerase family. As to quaternary structure, homodimer.

The catalysed reaction is aldehydo-D-ribose 5-phosphate = D-ribulose 5-phosphate. It participates in carbohydrate degradation; pentose phosphate pathway; D-ribose 5-phosphate from D-ribulose 5-phosphate (non-oxidative stage): step 1/1. Its function is as follows. Catalyzes the reversible conversion of ribose-5-phosphate to ribulose 5-phosphate. In Borreliella afzelii (strain PKo) (Borrelia afzelii), this protein is Ribose-5-phosphate isomerase A.